Consider the following 479-residue polypeptide: Mannose-1-phosphate guanylyltransferase RfbM (479 aa).

Belongs to the mannose-6-phosphate isomerase type 2 family. As to quaternary structure, homodimer.

The catalysed reaction is alpha-D-mannose 1-phosphate + GTP + H(+) = GDP-alpha-D-mannose + diphosphate. Its pathway is nucleotide-sugar biosynthesis; GDP-alpha-D-mannose biosynthesis; GDP-alpha-D-mannose from alpha-D-mannose 1-phosphate (GTP route): step 1/1. It functions in the pathway bacterial outer membrane biogenesis; LPS O-antigen biosynthesis. Involved in GDP-mannose biosynthesis which serves as the activated sugar nucleotide precursor for mannose residues in cell surface polysaccharides. This enzyme participates in synthesis of the LPS group B O antigen. The polypeptide is Mannose-1-phosphate guanylyltransferase RfbM (rfbM) (Salmonella typhimurium (strain LT2 / SGSC1412 / ATCC 700720)).